The sequence spans 625 residues: 1-deoxy-D-xylulose-5-phosphate synthase (625 aa).

Residues His84 and Gly125–Ser127 contribute to the thiamine diphosphate site. Asp156 lines the Mg(2+) pocket. Residues Gly157 to Ala158, Asn185, Phe292, and Glu373 each bind thiamine diphosphate. Asn185 lines the Mg(2+) pocket.

Belongs to the transketolase family. DXPS subfamily. Homodimer. Requires Mg(2+) as cofactor. Thiamine diphosphate is required as a cofactor.

It catalyses the reaction D-glyceraldehyde 3-phosphate + pyruvate + H(+) = 1-deoxy-D-xylulose 5-phosphate + CO2. The protein operates within metabolic intermediate biosynthesis; 1-deoxy-D-xylulose 5-phosphate biosynthesis; 1-deoxy-D-xylulose 5-phosphate from D-glyceraldehyde 3-phosphate and pyruvate: step 1/1. Catalyzes the acyloin condensation reaction between C atoms 2 and 3 of pyruvate and glyceraldehyde 3-phosphate to yield 1-deoxy-D-xylulose-5-phosphate (DXP). The chain is 1-deoxy-D-xylulose-5-phosphate synthase from Marinomonas sp. (strain MWYL1).